The following is a 2594-amino-acid chain: Immunoglobulin superfamily member 10 (2594 aa).

An N-terminal signal peptide occupies residues 1–25 (MQKRGREVSCLLISLTAICLVVTPG). One can recognise an LRRNT domain in the interval 29–56 (CPRRCACYVPTEVHCTFRYLTSIPDGIP). 6 LRR repeats span residues 58 to 79 (NVERVNLGYNSLTRLTENDFSG), 82 to 103 (RLELLMLHSNGIHRVSDKTFSG), 106 to 127 (SLQVLKMSYNKVQIIEKDTLYG), 130 to 151 (SLTRLHLDHNNIEFINPEAFYG), 154 to 175 (LLRLVHLEGNRLTKLHPDTFVS), and 186 to 207 (FIKYLYLSDNFLTSLPKEMVSS). Residues 219–281 (NPWTCDCHLK…VPSGSFLCTK (63 aa)) enclose the LRRCT domain. Asn-439 carries an N-linked (GlcNAc...) asparagine glycan. 2 consecutive Ig-like C2-type domains span residues 461 to 567 (PKAE…YRIT) and 571 to 661 (PYVE…FQVS). 2 disulfide bridges follow: Cys-497-Cys-551 and Cys-595-Cys-645. An N-linked (GlcNAc...) asparagine glycan is attached at Asn-627. The span at 670–685 (IEHDRDIDGSGLEEPK) shows a compositional bias: basic and acidic residues. Disordered regions lie at residues 670-725 (IEHD…RDLT) and 963-1008 (VSSN…GRER). The span at 715–725 (IHKKNKHRDLT) shows a compositional bias: basic residues. The segment covering 972–984 (TTKDPGFSKRPSD) has biased composition (basic and acidic residues). Residues 985–1003 (SHTTAPSLFQTPRNNSTGN) are compositionally biased toward polar residues. The N-linked (GlcNAc...) asparagine glycan is linked to Asn-1044. Disordered stretches follow at residues 1228-1251 (TATKPPEKAPLLPTDHGSSSPSTT), 1333-1364 (VRSKKAKDQTKGSLKNRKGPTITPRQISGYST), and 1428-1457 (SQESTAMKRASATPPLLSSGAPRMPTPSPP). Positions 1333-1342 (VRSKKAKDQT) are enriched in basic and acidic residues. The segment covering 1355 to 1364 (TPRQISGYST) has biased composition (polar residues). 10 Ig-like C2-type domains span residues 1619–1710 (PRII…VTLS), 1715–1807 (PARI…VKIQ), 1812–1901 (PPVI…RRVV), 1912–2005 (PRIE…VRLR), 2008–2106 (PAKI…VHLT), 2112–2200 (PRIR…YKLD), 2205–2302 (PPLI…LKVL), 2308–2398 (PTFR…ILLE), 2403–2493 (PVIL…VPVT), and 2499–2592 (PRII…TYIQ). Intrachain disulfides connect Cys-1641–Cys-1694, Cys-1738–Cys-1791, and Cys-1835–Cys-1888. One copy of the LRR 11 repeat lies at 1658 to 1681 (SGREISRGIQKTRFHVLPNGTLSI). 4 N-linked (GlcNAc...) asparagine glycosylation sites follow: Asn-1676, Asn-1780, Asn-1870, and Asn-1933. Intrachain disulfides connect Cys-1934/Cys-1987, Cys-2031/Cys-2090, Cys-2134/Cys-2184, Cys-2232/Cys-2284, Cys-2330/Cys-2382, Cys-2425/Cys-2477, and Cys-2521/Cys-2576. Asn-2072 carries an N-linked (GlcNAc...) asparagine glycan. N-linked (GlcNAc...) asparagine glycosylation occurs at Asn-2364. Position 2574 is a phosphotyrosine (Tyr-2574).

In terms of tissue distribution, in the embryo, expressed in the nasal mesenchyme.

It is found in the secreted. In terms of biological role, involved in the control of early migration of neurons expressing gonadotropin-releasing hormone (GNRH neurons). May be involved in the maintenance of osteochondroprogenitor cells pool. This is Immunoglobulin superfamily member 10 (Igsf10) from Mus musculus (Mouse).